A 185-amino-acid chain; its full sequence is Lysozyme g (185 aa).

Q1 is modified (pyrrolidone carboxylic acid). 2 disulfides stabilise this stretch: C4–C60 and C18–C29. Residues E73 and D86 contribute to the active site.

The protein belongs to the glycosyl hydrolase 23 family.

It localises to the secreted. It catalyses the reaction Hydrolysis of (1-&gt;4)-beta-linkages between N-acetylmuramic acid and N-acetyl-D-glucosamine residues in a peptidoglycan and between N-acetyl-D-glucosamine residues in chitodextrins.. This Casuarius casuarius (Southern cassowary) protein is Lysozyme g.